The chain runs to 471 residues: Dynein regulatory complex subunit 4 (471 aa).

Positions 1 to 24 (MAPKKKGTKKESKKDAVATGDIEG) are disordered. 2 coiled-coil regions span residues 23–239 (EGAS…YNDI) and 282–425 (LSRA…DVAK).

Belongs to the DRC4 family. In terms of assembly, component of the nexin-dynein regulatory complex (N-DRC). Interacts with DRC1, DRC2 and DRC5.

Its subcellular location is the cytoplasm. It is found in the cytoskeleton. The protein resides in the flagellum axoneme. The protein localises to the flagellum basal body. In terms of biological role, component of the nexin-dynein regulatory complex (N-DRC), a key regulator of ciliary/flagellar motility which maintains the alignment and integrity of the distal axoneme and regulates microtubule sliding in motile axonemes. Plays an important role in the assembly of the N-DRC linker. The chain is Dynein regulatory complex subunit 4 from Chlamydomonas reinhardtii (Chlamydomonas smithii).